Here is a 359-residue protein sequence, read N- to C-terminus: Phospho-N-acetylmuramoyl-pentapeptide-transferase (359 aa).

10 helical membrane passes run 3–23, 55–75, 84–104, 117–137, 156–176, 190–210, 231–251, 255–275, 283–303, and 330–350; these read QILI…PVLI, VAIV…GVVI, GLLV…DDLI, TAKT…ALQF, IATV…VVSA, LAAG…FWQF, LAII…WNAA, IFMG…LSVT, VVLG…ILAF, and VIIR…ALFY.

The protein belongs to the glycosyltransferase 4 family. MraY subfamily. Mg(2+) serves as cofactor.

The protein localises to the cell membrane. It carries out the reaction UDP-N-acetyl-alpha-D-muramoyl-L-alanyl-gamma-D-glutamyl-meso-2,6-diaminopimeloyl-D-alanyl-D-alanine + di-trans,octa-cis-undecaprenyl phosphate = di-trans,octa-cis-undecaprenyl diphospho-N-acetyl-alpha-D-muramoyl-L-alanyl-D-glutamyl-meso-2,6-diaminopimeloyl-D-alanyl-D-alanine + UMP. Its pathway is cell wall biogenesis; peptidoglycan biosynthesis. In terms of biological role, catalyzes the initial step of the lipid cycle reactions in the biosynthesis of the cell wall peptidoglycan: transfers peptidoglycan precursor phospho-MurNAc-pentapeptide from UDP-MurNAc-pentapeptide onto the lipid carrier undecaprenyl phosphate, yielding undecaprenyl-pyrophosphoryl-MurNAc-pentapeptide, known as lipid I. This Mycolicibacterium vanbaalenii (strain DSM 7251 / JCM 13017 / BCRC 16820 / KCTC 9966 / NRRL B-24157 / PYR-1) (Mycobacterium vanbaalenii) protein is Phospho-N-acetylmuramoyl-pentapeptide-transferase.